Reading from the N-terminus, the 268-residue chain is Hydroxyacylglutathione hydrolase (268 aa).

Zn(2+)-binding residues include histidine 56, histidine 58, aspartate 60, histidine 61, histidine 112, aspartate 137, and histidine 176. Residue 176–178 (HEY) participates in substrate binding.

The protein belongs to the metallo-beta-lactamase superfamily. Glyoxalase II family. Monomer. Requires Zn(2+) as cofactor.

It carries out the reaction an S-(2-hydroxyacyl)glutathione + H2O = a 2-hydroxy carboxylate + glutathione + H(+). Its pathway is secondary metabolite metabolism; methylglyoxal degradation; (R)-lactate from methylglyoxal: step 2/2. Its function is as follows. Thiolesterase that catalyzes the hydrolysis of S-D-lactoyl-glutathione to form glutathione and D-lactic acid. This Dictyostelium discoideum (Social amoeba) protein is Hydroxyacylglutathione hydrolase (hagh).